The chain runs to 322 residues: Probable heme-iron transport system permease protein IsdF (322 aa).

9 helical membrane passes run 9 to 29, 61 to 81, 89 to 109, 114 to 134, 143 to 163, 179 to 199, 233 to 253, 267 to 287, and 294 to 314; these read LLFLCLLVILIATAYISFVTG, ILIALMVGAMLAVSGALLQAA, ANIIGVSSGALIMRALCMLFI, FYLPLLSFIGGLIPFLIIILL, VSMILVGVALFVLLNGVLEIL, IWSDVYILAVSALLGLILTLL, VFLASATVAIVGQLAFLGIIV, VLIPFSTVIGAWLLLVADLLG, and LEIPANAILMIVGGPMLIYLI.

The protein belongs to the binding-protein-dependent transport system permease family. FecCD subfamily.

The protein localises to the cell membrane. Its function is as follows. Part of the binding-protein-dependent transport system for heme-iron. Responsible for the translocation of the substrate across the membrane. This is Probable heme-iron transport system permease protein IsdF (isdF) from Staphylococcus aureus (strain MSSA476).